Here is a 692-residue protein sequence, read N- to C-terminus: Elongation factor G (692 aa).

In terms of domain architecture, tr-type G spans 8–283 (NRIRNIGIAA…AVIDYLPAPT (276 aa)). GTP is bound by residues 17-24 (AHIDAGKT), 81-85 (DTPGH), and 135-138 (NKMD).

The protein belongs to the TRAFAC class translation factor GTPase superfamily. Classic translation factor GTPase family. EF-G/EF-2 subfamily.

Its subcellular location is the cytoplasm. In terms of biological role, catalyzes the GTP-dependent ribosomal translocation step during translation elongation. During this step, the ribosome changes from the pre-translocational (PRE) to the post-translocational (POST) state as the newly formed A-site-bound peptidyl-tRNA and P-site-bound deacylated tRNA move to the P and E sites, respectively. Catalyzes the coordinated movement of the two tRNA molecules, the mRNA and conformational changes in the ribosome. The polypeptide is Elongation factor G (Helicobacter pylori (strain P12)).